The following is a 764-amino-acid chain: 5-methyltetrahydropteroyltriglutamate--homocysteine methyltransferase (764 aa).

5-methyltetrahydropteroyltri-L-glutamate is bound by residues 16–19 (RELK) and Lys-117. Residues 442–444 (IGS) and Glu-495 each bind L-homocysteine. L-methionine-binding positions include 442–444 (IGS) and Glu-495. 5-methyltetrahydropteroyltri-L-glutamate-binding positions include 526-527 (RC) and Trp-572. Residue Asp-610 participates in L-homocysteine binding. Residue Asp-610 participates in L-methionine binding. Position 616 (Glu-616) interacts with 5-methyltetrahydropteroyltri-L-glutamate. Positions 652, 654, and 676 each coordinate Zn(2+). Catalysis depends on His-705, which acts as the Proton donor. Cys-737 lines the Zn(2+) pocket.

Belongs to the vitamin-B12 independent methionine synthase family. Requires Zn(2+) as cofactor.

The enzyme catalyses 5-methyltetrahydropteroyltri-L-glutamate + L-homocysteine = tetrahydropteroyltri-L-glutamate + L-methionine. Its pathway is amino-acid biosynthesis; L-methionine biosynthesis via de novo pathway; L-methionine from L-homocysteine (MetE route): step 1/1. Its function is as follows. Catalyzes the transfer of a methyl group from 5-methyltetrahydrofolate to homocysteine resulting in methionine formation. The protein is 5-methyltetrahydropteroyltriglutamate--homocysteine methyltransferase of Bordetella pertussis (strain Tohama I / ATCC BAA-589 / NCTC 13251).